A 463-amino-acid polypeptide reads, in one-letter code: Immune-associated nucleotide-binding protein 10 (463 aa).

An AIG1-type G domain is found at 3–211; the sequence is EPIKNIVLVG…YTYQLHRKIK (209 aa). Residues 12 to 19 form a G1 region; sequence GRTGNGKS. GTP contacts are provided by residues 12-20 and serine 33; that span reads GRTGNGKSS. The interval 39–43 is G2; that stretch reads GVTMI. Residues 61–64 are G3; the sequence is DTPG. The interval 131 to 134 is G4; it reads TGGD. Residues 170–172 form a G5 region; it reads DNK. GTP is bound at residue asparagine 171. A coiled-coil region spans residues 173-308; it reads SKDEKKKVEQ…KQLIAQANRM (136 aa).

The protein belongs to the TRAFAC class TrmE-Era-EngA-EngB-Septin-like GTPase superfamily. AIG1/Toc34/Toc159-like paraseptin GTPase family. IAN subfamily. In terms of tissue distribution, expressed in radicles of the germinating seeds.

This chain is Immune-associated nucleotide-binding protein 10, found in Arabidopsis thaliana (Mouse-ear cress).